The primary structure comprises 499 residues: Interferon regulatory factor 5 (499 aa).

The Nuclear localization signal signature appears at 12–18; that stretch reads PRRVRLK. The segment at residues 14-122 is a DNA-binding region (IRF tryptophan pentad repeat); the sequence is RVRLKPWLVA…QPYKVYEVCS (109 aa). Residues 121 to 142 are disordered; sequence CSNGPAPAESQPSEDNAEEEEE. The short motif at 145–155 is the Nuclear export signal element; it reads LQKMLPGLSIT. Phosphoserine; by TBK1 occurs at positions 153 and 294. At serine 302 the chain carries Phosphoserine. Residues lysine 412 and lysine 413 each participate in a glycyl lysine isopeptide (Lys-Gly) (interchain with G-Cter in ubiquitin) cross-link. A phosphoserine mark is found at serine 432, serine 436, serine 438, serine 441, and serine 447.

Belongs to the IRF family. Homodimer, when phosphorylated. Interacts with TASL (via pLxIS motif); interaction takes place downstream of TLR7, TLR8 or TLR9, leading to its activation. Interacts with MYD88 and TRAF6. In terms of processing, phosphorylation of serine and threonine residues by IKBKB in a C-terminal autoinhibitory region, stimulates dimerization, transport into the nucleus, assembly with the coactivator CBP/EP300 and initiation of transcription. 'Lys-63'-linked polyubiquitination by TRAF6 is required for activation.

The protein localises to the cytoplasm. Its subcellular location is the nucleus. Maintained as a monomer in an autoinhibited state. Phosphorylation and activation follow the following steps: innate adapter protein TASL recruits IRF5, thereby licensing IRF5 for phosphorylation by IKBKB. Phosphorylated IRF5 dissociates from the adapter proteins, dimerizes, and then enters the nucleus to induce IFNs. Transcription factor that plays a critical role in innate immunity by activating expression of type I interferon (IFN) IFNA and INFB and inflammatory cytokines downstream of endolysosomal toll-like receptors TLR7, TLR8 and TLR9. Regulates the transcription of type I IFN genes (IFN-alpha and IFN-beta) and IFN-stimulated genes (ISG) by binding to an interferon-stimulated response element (ISRE) in their promoters. Can efficiently activate both the IFN-beta (IFNB) and the IFN-alpha (IFNA) genes and mediate their induction downstream of the TLR-activated, MyD88-dependent pathway. The sequence is that of Interferon regulatory factor 5 from Bos taurus (Bovine).